A 292-amino-acid polypeptide reads, in one-letter code: Cyclin-dependent kinase 5 (292 aa).

One can recognise a Protein kinase domain in the interval 4 to 286; the sequence is YEKLEKIGEG…AEEALQHPYF (283 aa). ATP contacts are provided by residues 10–18 and Lys33; that span reads IGEGTYGTV. Tyr15 is modified (phosphotyrosine; by ABL1, EPHA4 and FYN). Thr17 carries the phosphothreonine modification. Residue Lys56 is modified to N6-acetyllysine. Position 72 is a phosphoserine (Ser72). Asp126 functions as the Proton acceptor in the catalytic mechanism. Phosphoserine is present on Ser159.

This sequence belongs to the protein kinase superfamily. CMGC Ser/Thr protein kinase family. CDC2/CDKX subfamily. As to quaternary structure, heterodimer composed of a catalytic subunit CDK5 and a regulatory subunit CDK5R1 (p25) and macromolecular complex composed of at least CDK5, CDK5R1 (p35) and CDK5RAP1 or CDK5RAP2 or CDK5RAP3. Only the heterodimer shows kinase activity. Under neurotoxic stress and neuronal injury conditions, p35 is cleaved by calpain to generate p25 that hyperactivates CDK5, that becomes functionally disabled and often toxic. Found in a trimolecular complex with CABLES1 and ABL1. Interacts with CABLES1 and CABLES2. Interacts with AATK and GSTP1. Binds to HDAC1 when in complex with p25. Interaction with myristoylation p35 promotes CDK5 association with membranes. Both isoforms 1 and 2 interacts with beta-catenin/CTNNB1. Interacts with delta-catenin/CTNND2 and APEX1. Interacts with P53/TP53 in neurons. Interacts with EPHA4; may mediate the activation of NGEF by EPHA4. Interacts with PTK2/FAK1. The complex p35/CDK5 interacts with CLOCK. Phosphorylation on Tyr-15 by ABL1 and FYN, and on Ser-159 by casein kinase 1 promotes kinase activity. By contrast, phosphorylation at Thr-14 inhibits activity. In terms of processing, phosphorylation at Ser-159 is essential for maximal catalytic activity.

The protein localises to the nucleus. It localises to the cytoplasm. Its subcellular location is the cell membrane. The protein resides in the perikaryon. It is found in the cell projection. The protein localises to the lamellipodium. It localises to the growth cone. Its subcellular location is the postsynaptic density. The protein resides in the synapse. It carries out the reaction L-seryl-[protein] + ATP = O-phospho-L-seryl-[protein] + ADP + H(+). The catalysed reaction is L-threonyl-[protein] + ATP = O-phospho-L-threonyl-[protein] + ADP + H(+). With respect to regulation, inhibited by 2-(1-ethyl-2-hydroxyethylamino)-6-benzylamino-9-isopropylpurine (roscovitine), 1-isopropyl-4-aminobenzyl-6-ether-linked benzimidazoles, resveratrol, AT-7519 and olomoucine. Activated by CDK5R1 (p35) and CDK5R2 (p39) during the development of the nervous system; degradation of CDK5R1 (p35) and CDK5R2 (p39) by proteasome result in down regulation of kinase activity, during this process, CDK5 phosphorylates p35 and induces its ubiquitination and subsequent degradation. Kinase activity is mainly determined by the amount of p35 available and subcellular location; reversible association to plasma membrane inhibits activity. Long-term inactivation as well as CDK5R1 (p25)-mediated hyperactivation of CDK5 triggers cell death. The pro-death activity of hyperactivated CDK5 is suppressed by membrane association of CDK5, via myristoylation of p35. Brain-derived neurotrophic factor, glial-derived neurotrophic factor, nerve growth factor (NGF), retinoic acid, laminin and neuregulin promote activity. Neurotoxicity enhances nuclear activity, thus leading to MEF2 phosphorylation and inhibition prior to apoptosis of cortical neurons. Repression by GSTP1 via p25/p35 translocation prevents neurodegeneration. In terms of biological role, proline-directed serine/threonine-protein kinase essential for neuronal cell cycle arrest and differentiation and may be involved in apoptotic cell death in neuronal diseases by triggering abortive cell cycle re-entry. Interacts with D1 and D3-type G1 cyclins. Phosphorylates SRC, NOS3, VIM/vimentin, p35/CDK5R1, MEF2A, SIPA1L1, SH3GLB1, PXN, PAK1, MCAM/MUC18, SEPT5, SYN1, DNM1, AMPH, SYNJ1, CDK16, RAC1, RHOA, CDC42, TONEBP/NFAT5, MAPT/TAU, MAP1B, histone H1, p53/TP53, HDAC1, APEX1, PTK2/FAK1, huntingtin/HTT, ATM, MAP2, NEFH and NEFM. Regulates several neuronal development and physiological processes including neuronal survival, migration and differentiation, axonal and neurite growth, synaptogenesis, oligodendrocyte differentiation, synaptic plasticity and neurotransmission, by phosphorylating key proteins. Negatively regulates the CACNA1B/CAV2.2 -mediated Ca(2+) release probability at hippocampal neuronal soma and synaptic terminals. Activated by interaction with CDK5R1 (p35) and CDK5R2 (p39), especially in postmitotic neurons, and promotes CDK5R1 (p35) expression in an autostimulation loop. Phosphorylates many downstream substrates such as Rho and Ras family small GTPases (e.g. PAK1, RAC1, RHOA, CDC42) or microtubule-binding proteins (e.g. MAPT/TAU, MAP2, MAP1B), and modulates actin dynamics to regulate neurite growth and/or spine morphogenesis. Also phosphorylates exocytosis associated proteins such as MCAM/MUC18, SEPT5, SYN1, and CDK16/PCTAIRE1 as well as endocytosis associated proteins such as DNM1, AMPH and SYNJ1 at synaptic terminals. In the mature central nervous system (CNS), regulates neurotransmitter movements by phosphorylating substrates associated with neurotransmitter release and synapse plasticity; synaptic vesicle exocytosis, vesicles fusion with the presynaptic membrane, and endocytosis. Promotes cell survival by activating anti-apoptotic proteins BCL2 and STAT3, and negatively regulating of JNK3/MAPK10 activity. Phosphorylation of p53/TP53 in response to genotoxic and oxidative stresses enhances its stabilization by preventing ubiquitin ligase-mediated proteasomal degradation, and induces transactivation of p53/TP53 target genes, thus regulating apoptosis. Phosphorylation of p35/CDK5R1 enhances its stabilization by preventing calpain-mediated proteolysis producing p25/CDK5R1 and avoiding ubiquitin ligase-mediated proteasomal degradation. During aberrant cell-cycle activity and DNA damage, p25/CDK5 activity elicits cell-cycle activity and double-strand DNA breaks that precedes neuronal death by deregulating HDAC1. DNA damage triggered phosphorylation of huntingtin/HTT in nuclei of neurons protects neurons against polyglutamine expansion as well as DNA damage mediated toxicity. Phosphorylation of PXN reduces its interaction with PTK2/FAK1 in matrix-cell focal adhesions (MCFA) during oligodendrocytes (OLs) differentiation. Negative regulator of Wnt/beta-catenin signaling pathway. Activator of the GAIT (IFN-gamma-activated inhibitor of translation) pathway, which suppresses expression of a post-transcriptional regulon of proinflammatory genes in myeloid cells; phosphorylates the linker domain of glutamyl-prolyl tRNA synthetase (EPRS) in a IFN-gamma-dependent manner, the initial event in assembly of the GAIT complex. Phosphorylation of SH3GLB1 is required for autophagy induction in starved neurons. Phosphorylation of TONEBP/NFAT5 in response to osmotic stress mediates its rapid nuclear localization. MEF2 is inactivated by phosphorylation in nucleus in response to neurotoxin, thus leading to neuronal apoptosis. APEX1 AP-endodeoxyribonuclease is repressed by phosphorylation, resulting in accumulation of DNA damage and contributing to neuronal death. NOS3 phosphorylation down regulates NOS3-derived nitrite (NO) levels. SRC phosphorylation mediates its ubiquitin-dependent degradation and thus leads to cytoskeletal reorganization. May regulate endothelial cell migration and angiogenesis via the modulation of lamellipodia formation. Involved in dendritic spine morphogenesis by mediating the EFNA1-EPHA4 signaling. The complex p35/CDK5 participates in the regulation of the circadian clock by modulating the function of CLOCK protein: phosphorylates CLOCK at 'Thr-451' and 'Thr-461' and regulates the transcriptional activity of the CLOCK-BMAL1 heterodimer in association with altered stability and subcellular distribution. The sequence is that of Cyclin-dependent kinase 5 from Bos taurus (Bovine).